A 238-amino-acid polypeptide reads, in one-letter code: Cysteine-rich venom protein pseudecin (238 aa).

An N-terminal signal peptide occupies residues 1–19; it reads MIAFIVLLSLAAVLQQSSG. The propeptide occupies 20–28; the sequence is TVDFASESS. In terms of domain architecture, SCP spans 38–164; that stretch reads VDKHNALRRS…SSKYLYVCQY (127 aa). Thr51 and Ser106 together coordinate Zn(2+). Cystine bridges form between Cys75-Cys153, Cys92-Cys165, Cys148-Cys162, Cys184-Cys191, Cys187-Cys196, Cys200-Cys233, Cys209-Cys227, and Cys218-Cys231. Residues 200–233 form the ShKT domain; it reads CNYNNDFSNCKSLAKKSKCQTEWIKKKCPASCFC.

As to expression, expressed by the venom gland.

The protein localises to the secreted. In terms of biological role, blocks olfactory (CNGA2) and retinal (CNGA1) CNG channel currents. Is really less potent that Pseudechetoxin. Does not affect neither depolarization- nor caffeine-induced contraction of smooth muscle. The protein is Cysteine-rich venom protein pseudecin of Pseudechis porphyriacus (Red-bellied black snake).